The sequence spans 151 residues: Deoxyuridine 5'-triphosphate nucleotidohydrolase (151 aa).

Substrate-binding positions include 70 to 72 (RSG), N83, 87 to 89 (LID), and M97.

It belongs to the dUTPase family. Mg(2+) is required as a cofactor.

The enzyme catalyses dUTP + H2O = dUMP + diphosphate + H(+). The protein operates within pyrimidine metabolism; dUMP biosynthesis; dUMP from dCTP (dUTP route): step 2/2. In terms of biological role, this enzyme is involved in nucleotide metabolism: it produces dUMP, the immediate precursor of thymidine nucleotides and it decreases the intracellular concentration of dUTP so that uracil cannot be incorporated into DNA. This is Deoxyuridine 5'-triphosphate nucleotidohydrolase from Glaesserella parasuis serovar 5 (strain SH0165) (Haemophilus parasuis).